A 633-amino-acid chain; its full sequence is tRNA uridine 5-carboxymethylaminomethyl modification enzyme MnmG (633 aa).

Residues 13 to 18 (GGGHAG), Val-125, and Ser-180 each bind FAD. 273-287 (GPRYCPSIEDKITRF) is an NAD(+) binding site. Residue Gln-370 coordinates FAD.

This sequence belongs to the MnmG family. As to quaternary structure, homodimer. Heterotetramer of two MnmE and two MnmG subunits. FAD serves as cofactor.

It is found in the cytoplasm. Functionally, NAD-binding protein involved in the addition of a carboxymethylaminomethyl (cmnm) group at the wobble position (U34) of certain tRNAs, forming tRNA-cmnm(5)s(2)U34. This is tRNA uridine 5-carboxymethylaminomethyl modification enzyme MnmG from Alteromonas mediterranea (strain DSM 17117 / CIP 110805 / LMG 28347 / Deep ecotype).